The sequence spans 356 residues: tRNA-specific 2-thiouridylase MnmA (356 aa).

6-13 provides a ligand contact to ATP; sequence AVSGGTDS. The active-site Nucleophile is cysteine 95. Cysteine 95 and cysteine 195 form a disulfide bridge. Glycine 119 contributes to the ATP binding site. Residues 145–147 form an interaction with tRNA region; the sequence is KDQ. Cysteine 195 serves as the catalytic Cysteine persulfide intermediate. The interval 300 to 301 is interaction with tRNA; it reads RY.

This sequence belongs to the MnmA/TRMU family.

The protein localises to the cytoplasm. It catalyses the reaction S-sulfanyl-L-cysteinyl-[protein] + uridine(34) in tRNA + AH2 + ATP = 2-thiouridine(34) in tRNA + L-cysteinyl-[protein] + A + AMP + diphosphate + H(+). In terms of biological role, catalyzes the 2-thiolation of uridine at the wobble position (U34) of tRNA, leading to the formation of s(2)U34. This is tRNA-specific 2-thiouridylase MnmA from Oleidesulfovibrio alaskensis (strain ATCC BAA-1058 / DSM 17464 / G20) (Desulfovibrio alaskensis).